Reading from the N-terminus, the 288-residue chain is MEINFRNVSFSYQLNTPFSTAALKDVSFDIPDGSFTSIVGHTGSGKSTVLQLIDGLLIPEKGHIQAGSFQMNSGSNAKHLKKFRKNVGFIFQFSENQLFEETVEKDLIFGPKNFGVEEKIAKEKARKVLKIVNLPESFLQKSPLDLSGGQRRRVAIASILISDPQLLLLDEPVIGLDPGSKDEIMNLFSRLNQQGKTIVMVSHEMDDVADYSDQIIVLNAGRISKVGSPEEIFSDESYLRKEKLRLPSAIDFAKQLKKVGFPINVSIKNKRELLREIKKQFEIEKDKK.

One can recognise an ABC transporter domain in the interval 3–245; the sequence is INFRNVSFSY…ESYLRKEKLR (243 aa). ATP is bound at residue 40–47; the sequence is GHTGSGKS.

This sequence belongs to the ABC transporter superfamily. Energy-coupling factor EcfA family. In terms of assembly, forms a stable energy-coupling factor (ECF) transporter complex composed of 2 membrane-embedded substrate-binding proteins (S component), 2 ATP-binding proteins (A component) and 2 transmembrane proteins (T component).

Its subcellular location is the cell membrane. Functionally, ATP-binding (A) component of a common energy-coupling factor (ECF) ABC-transporter complex. Unlike classic ABC transporters this ECF transporter provides the energy necessary to transport a number of different substrates. The polypeptide is Energy-coupling factor transporter ATP-binding protein EcfA3 (Oenococcus oeni (strain ATCC BAA-331 / PSU-1)).